A 431-amino-acid polypeptide reads, in one-letter code: Trigger factor (431 aa).

Residues 158–243 (GYLVALETWS…VIEVSEPVLL (86 aa)) enclose the PPIase FKBP-type domain.

This sequence belongs to the FKBP-type PPIase family. Tig subfamily.

It is found in the cytoplasm. The catalysed reaction is [protein]-peptidylproline (omega=180) = [protein]-peptidylproline (omega=0). Involved in protein export. Acts as a chaperone by maintaining the newly synthesized protein in an open conformation. Functions as a peptidyl-prolyl cis-trans isomerase. In Xylella fastidiosa (strain M23), this protein is Trigger factor.